A 70-amino-acid chain; its full sequence is Large ribosomal subunit protein bL31 (70 aa).

Zn(2+) is bound by residues C16, C18, C37, and C40.

Belongs to the bacterial ribosomal protein bL31 family. Type A subfamily. As to quaternary structure, part of the 50S ribosomal subunit. It depends on Zn(2+) as a cofactor.

Functionally, binds the 23S rRNA. This chain is Large ribosomal subunit protein bL31, found in Colwellia psychrerythraea (strain 34H / ATCC BAA-681) (Vibrio psychroerythus).